The following is a 241-amino-acid chain: GPI-anchored hemophore RBT5 (241 aa).

Positions 1 to 20 (MLALSLLSIVSIASAAGVTA) are cleaved as a signal peptide. One can recognise a CFEM domain in the interval 26-137 (NPYTIFPSVA…DALAKAADAA (112 aa)). 4 disulfide bridges follow: cysteine 54–cysteine 94, cysteine 58–cysteine 89, cysteine 68–cysteine 75, and cysteine 77–cysteine 110. Heme is bound at residue aspartate 72. Low complexity-rich tracts occupy residues 140–154 (TTAE…AAET) and 163–182 (KETT…PAET). Positions 140-210 (TTAESTTAES…SVAQSSSSAA (71 aa)) are disordered. Residues 183–199 (SKAEETSKAAETTKAEE) are compositionally biased toward basic and acidic residues. Residues 200-210 (SSVAQSSSSAA) show a composition bias toward low complexity. Asparagine 221 is lipidated: GPI-anchor amidated asparagine. The propeptide at 222-241 (AGNMPAVAIGGVIAAVAALF) is removed in mature form.

The protein belongs to the RBT5 family. In terms of assembly, interacts with PGA7. In terms of processing, the GPI-anchor is attached to the protein in the endoplasmic reticulum and serves to target the protein to the cell surface. There, the glucosamine-inositol phospholipid moiety is cleaved off and the GPI-modified mannoprotein is covalently attached via its lipidless GPI glycan remnant to the 1,6-beta-glucan of the outer cell wall layer. Mannosylated.

The protein resides in the secreted. Its subcellular location is the cell wall. The protein localises to the cell membrane. GPI-linked hyphal surface heme-binding protein involved in heme-iron utilization. Heme transfer occurs between PGA7, RBT5 and CSA2 supporting a model in which the 3 CFEM proteins cooperate in a heme-acquisition system and form a cross-cell wall heme-transfer cascade. The ability to acquire iron from host tissues is a major virulence factor of pathogenic microorganisms. Required for biofilm formation. In Candida albicans (strain SC5314 / ATCC MYA-2876) (Yeast), this protein is GPI-anchored hemophore RBT5.